Consider the following 160-residue polypeptide: Putative pre-16S rRNA nuclease (160 aa).

Belongs to the YqgF nuclease family.

Its subcellular location is the cytoplasm. In terms of biological role, could be a nuclease involved in processing of the 5'-end of pre-16S rRNA. The polypeptide is Putative pre-16S rRNA nuclease (Rhodopseudomonas palustris (strain ATCC BAA-98 / CGA009)).